Consider the following 93-residue polypeptide: Large ribosomal subunit protein bL27 (93 aa).

A propeptide spanning residues 1–9 (MLQLNLQFF) is cleaved from the precursor. The interval 14–33 (GVGSTKNGRDSISKRLGAKR) is disordered.

The protein belongs to the bacterial ribosomal protein bL27 family. In terms of processing, the N-terminus is cleaved by ribosomal processing cysteine protease Prp.

The chain is Large ribosomal subunit protein bL27 from Exiguobacterium sp. (strain ATCC BAA-1283 / AT1b).